Reading from the N-terminus, the 442-residue chain is Elongation factor 1-gamma (442 aa).

The 86-residue stretch at 2-87 (AAGTLYTYPE…YLSNDVLRGS (86 aa)) folds into the GST N-terminal domain. Positions 88–216 (TPQASAQVLQ…VKLCEKMAQF (129 aa)) constitute a GST C-terminal domain. Basic and acidic residues-rich tracts occupy residues 227–242 (KKEA…KEGG) and 249–263 (QEKK…KAAP). The interval 227 to 273 (KKEAPIKKEKGGKEGGKQQPQQQEKKEKKKEEKKAAPAEEEMDECEA) is disordered. One can recognise an EF-1-gamma C-terminal domain in the interval 281–442 (AKDPFAHLPK…KPFNQGKIFK (162 aa)).

EF-1 is composed of four subunits: alpha, beta, delta, and gamma.

Functionally, probably plays a role in anchoring the complex to other cellular components. The polypeptide is Elongation factor 1-gamma (eef1g) (Danio rerio (Zebrafish)).